A 226-amino-acid chain; its full sequence is Peptidyl-prolyl cis-trans isomerase CYP23 (226 aa).

A signal peptide spans 1 to 22 (MGITRNLILGLACLAFVSIAKA). A PPIase cyclophilin-type domain is found at 34–191 (VVFQTSYGDI…ERITILSTYY (158 aa)).

This sequence belongs to the cyclophilin-type PPIase family. As to expression, ubiquitous. Lower expression in roots.

The protein localises to the endoplasmic reticulum. It carries out the reaction [protein]-peptidylproline (omega=180) = [protein]-peptidylproline (omega=0). Its function is as follows. PPIases accelerate the folding of proteins. It catalyzes the cis-trans isomerization of proline imidic peptide bonds in oligopeptides. The chain is Peptidyl-prolyl cis-trans isomerase CYP23 (CYP23) from Arabidopsis thaliana (Mouse-ear cress).